Reading from the N-terminus, the 84-residue chain is UPF0473 protein CKL_1327 (84 aa).

Belongs to the UPF0473 family.

This chain is UPF0473 protein CKL_1327, found in Clostridium kluyveri (strain ATCC 8527 / DSM 555 / NBRC 12016 / NCIMB 10680 / K1).